Here is a 452-residue protein sequence, read N- to C-terminus: Ribosomal protein uS12 methylthiotransferase RimO (452 aa).

The MTTase N-terminal domain occupies 5-116 (PTIAFSHLGC…IVDVLQRTES (112 aa)). 6 residues coordinate [4Fe-4S] cluster: C14, C50, C79, C154, C158, and C161. In terms of domain architecture, Radical SAM core spans 140-369 (TTTSAVAYLR…MATQQPIAER (230 aa)). In terms of domain architecture, TRAM spans 372 to 438 (RAQIGRLVDV…IYDLHGEVAS (67 aa)).

It belongs to the methylthiotransferase family. RimO subfamily. It depends on [4Fe-4S] cluster as a cofactor.

The protein resides in the cytoplasm. It catalyses the reaction L-aspartate(89)-[ribosomal protein uS12]-hydrogen + (sulfur carrier)-SH + AH2 + 2 S-adenosyl-L-methionine = 3-methylsulfanyl-L-aspartate(89)-[ribosomal protein uS12]-hydrogen + (sulfur carrier)-H + 5'-deoxyadenosine + L-methionine + A + S-adenosyl-L-homocysteine + 2 H(+). Functionally, catalyzes the methylthiolation of an aspartic acid residue of ribosomal protein uS12. The protein is Ribosomal protein uS12 methylthiotransferase RimO of Synechococcus sp. (strain ATCC 27144 / PCC 6301 / SAUG 1402/1) (Anacystis nidulans).